We begin with the raw amino-acid sequence, 20 residues long: Alpha-amylase (20 aa).

It catalyses the reaction Endohydrolysis of (1-&gt;4)-alpha-D-glucosidic linkages in polysaccharides containing three or more (1-&gt;4)-alpha-linked D-glucose units.. Strongly inhibited by Hg (2+). Inhibited by Zn (2+). Activated by Fe (2+), Mg (2+) and Ba (2+). In terms of biological role, alpha-amylase active towards amylose, starch, amylopectin and maltodextrins. Has lower activity towards glycogen, and is not active towards alpha/beta-cyclodextrin. This is Alpha-amylase from Bacillus sp.